A 197-amino-acid polypeptide reads, in one-letter code: Beta-crystallin A2 (197 aa).

The tract at residues 1 to 11 (MSGTLSQGSSP) is N-terminal arm. Beta/gamma crystallin 'Greek key' domains are found at residues 12–52 (ARLT…KVES) and 53–99 (GAWV…RPLL). A connecting peptide region spans residues 100–105 (CANHSD). Beta/gamma crystallin 'Greek key' domains lie at 106–147 (SRVT…KVTS) and 148–196 (GAWV…RRVQ).

Belongs to the beta/gamma-crystallin family. As to quaternary structure, homo/heterodimer, or complexes of higher-order. The structure of beta-crystallin oligomers seems to be stabilized through interactions between the N-terminal arms.

Crystallins are the dominant structural components of the vertebrate eye lens. The protein is Beta-crystallin A2 (CRYBA2) of Macropus fuliginosus (Western gray kangaroo).